A 329-amino-acid polypeptide reads, in one-letter code: L-threonine dehydratase catabolic TdcB (329 aa).

53–54 (RT) lines the AMP pocket. Lysine 58 is subject to N6-(pyridoxal phosphate)lysine. Residues glutamine 88, 119 to 120 (DY), and asparagine 314 each bind AMP.

The protein belongs to the serine/threonine dehydratase family. In terms of assembly, in the native structure, TdcB is in a dimeric form, whereas in the TdcB-AMP complex, it exists in a tetrameric form (dimer of dimers). It depends on pyridoxal 5'-phosphate as a cofactor.

The enzyme catalyses L-threonine = 2-oxobutanoate + NH4(+). The catalysed reaction is L-serine = pyruvate + NH4(+). Its pathway is amino-acid degradation; L-threonine degradation via propanoate pathway; propanoate from L-threonine: step 1/4. Its activity is regulated as follows. Each protein molecule can bind up to four molecules of AMP, which act as an allosteric activator to the enzyme. Functionally, catalyzes the anaerobic formation of alpha-ketobutyrate and ammonia from threonine in a two-step reaction. The first step involved a dehydration of threonine and a production of enamine intermediates (aminocrotonate), which tautomerizes to its imine form (iminobutyrate). Both intermediates are unstable and short-lived. The second step is the nonenzymatic hydrolysis of the enamine/imine intermediates to form 2-ketobutyrate and free ammonia. In the low water environment of the cell, the second step is accelerated by RidA. TdcB also dehydrates serine to yield pyruvate via analogous enamine/imine intermediates. This chain is L-threonine dehydratase catabolic TdcB (tdcB), found in Escherichia coli O157:H7.